The primary structure comprises 586 residues: Phosphomethylpyrimidine synthase (586 aa).

The segment at 1-59 (MKQSVSAEQIELKSSLPGSKKVYVDGPREGMKVPMREIEQSDTNGVPNPPIRVYDTSGP) is disordered. The segment covering 22–39 (VYVDGPREGMKVPMREIE) has biased composition (basic and acidic residues). Substrate-binding positions include Asn193, Met222, Tyr251, His287, 307–309 (SRG), 348–351 (DGLR), and Glu387. Position 391 (His391) interacts with Zn(2+). Tyr414 contacts substrate. His455 lines the Zn(2+) pocket. Residues Cys535, Cys538, and Cys543 each coordinate [4Fe-4S] cluster.

The protein belongs to the ThiC family. Requires [4Fe-4S] cluster as cofactor.

It carries out the reaction 5-amino-1-(5-phospho-beta-D-ribosyl)imidazole + S-adenosyl-L-methionine = 4-amino-2-methyl-5-(phosphooxymethyl)pyrimidine + CO + 5'-deoxyadenosine + formate + L-methionine + 3 H(+). Its pathway is cofactor biosynthesis; thiamine diphosphate biosynthesis. Catalyzes the synthesis of the hydroxymethylpyrimidine phosphate (HMP-P) moiety of thiamine from aminoimidazole ribotide (AIR) in a radical S-adenosyl-L-methionine (SAM)-dependent reaction. This is Phosphomethylpyrimidine synthase from Bacillus cereus (strain ZK / E33L).